Consider the following 213-residue polypeptide: Superoxide dismutase [Fe] (213 aa).

Positions 26, 73, 156, and 160 each coordinate Fe cation.

This sequence belongs to the iron/manganese superoxide dismutase family. As to quaternary structure, homodimer. It depends on Fe cation as a cofactor.

The catalysed reaction is 2 superoxide + 2 H(+) = H2O2 + O2. Its function is as follows. Destroys superoxide anion radicals which are normally produced within the cells and which are toxic to biological systems. The polypeptide is Superoxide dismutase [Fe] (sodB) (Helicobacter pylori (strain J99 / ATCC 700824) (Campylobacter pylori J99)).